The sequence spans 166 residues: uncharacterized protein (166 aa).

An HTH asnC-type domain is found at 3–65; that stretch reads LTEKETEILE…IDWRKVDGHE (63 aa). Positions 22-41 form a DNA-binding region, H-T-H motif; it reads LETIAKMAGIPVNEVKTIID.

This is an uncharacterized protein from Bacillus subtilis (strain 168).